The sequence spans 560 residues: NADH-quinone oxidoreductase subunit C/D (560 aa).

The segment at 2–157 is NADH dehydrogenase I subunit C; that stretch reads NKLENLKQLL…NNQQACTNSL (156 aa). The tract at residues 175–560 is NADH dehydrogenase I subunit D; sequence KYLPLNIGPS…MNLIAGELDR (386 aa).

The protein in the N-terminal section; belongs to the complex I 30 kDa subunit family. This sequence in the C-terminal section; belongs to the complex I 49 kDa subunit family. In terms of assembly, NDH-1 is composed of 13 different subunits. Subunits NuoB, CD, E, F, and G constitute the peripheral sector of the complex.

The protein resides in the cytoplasm. It is found in the cell inner membrane. The enzyme catalyses a quinone + NADH + 5 H(+)(in) = a quinol + NAD(+) + 4 H(+)(out). Functionally, NDH-1 shuttles electrons from NADH, via FMN and iron-sulfur (Fe-S) centers, to quinones in the respiratory chain. The immediate electron acceptor for the enzyme in this species is believed to be ubiquinone. Couples the redox reaction to proton translocation (for every two electrons transferred, four hydrogen ions are translocated across the cytoplasmic membrane), and thus conserves the redox energy in a proton gradient. In Bdellovibrio bacteriovorus (strain ATCC 15356 / DSM 50701 / NCIMB 9529 / HD100), this protein is NADH-quinone oxidoreductase subunit C/D.